The following is a 186-amino-acid chain: MDADSDVALDILITNVVCVFRTRCHLNLRKIALEGLNVIYKREVSKVLMKLRKPRITATIWSSGKIICTGATSEEEAKVGARRLARSLQKLGFQVKFTEFKVVNVLAVCTMPFEIRLNEFTKQNRPHASYEPELHPAVCYRIKSLRATLQIFSTGSITVTGPDVKSVASAIEQIYPFVFESRKTIL.

The protein belongs to the TBP family. In terms of tissue distribution, expressed ubiquitously with highest expression in the ovary and testis.

The protein localises to the cytoplasm. Its subcellular location is the nucleus. Functionally, part of a specialized transcription system that mediates the transcription of most ribosomal proteins through the 5'-TCT-3' motif which is a core promoter element at these genes. Seems to also mediate the transcription of NF1. Does not bind the TATA box. Members of the TBP family are differentially required to regulate transcription and development during early embryogenesis. Particularly regulates genes that have a role in catabolism. This is TATA box-binding protein-like 1 (tbpl1) from Xenopus laevis (African clawed frog).